Consider the following 277-residue polypeptide: Caspase-3 (277 aa).

Met-1 carries the N-acetylmethionine modification. 2 propeptides span residues 1–9 (MENTENSVD) and 10–28 (SKSIKSLEPKIIHGSKSVD). Residue Lys-11 is modified to N6-acetyllysine. Position 26 is a phosphoserine (Ser-26). Catalysis depends on residues His-121 and Cys-163. S-nitrosocysteine; in inhibited form is present on Cys-163.

The protein belongs to the peptidase C14A family. Heterotetramer that consists of two anti-parallel arranged heterodimers, each one formed by a 17 kDa (p17) and a 12 kDa (p12) subunit. Interacts with BIRC6/bruce. In terms of processing, cleavage by granzyme B, caspase-6, caspase-8 and caspase-10 generates the two active subunits. Additional processing of the propeptides is likely due to the autocatalytic activity of the activated protease. Active heterodimers between the small subunit of caspase-7 protease and the large subunit of caspase-3 also occur and vice versa. S-nitrosylated on its catalytic site cysteine in unstimulated cell lines and denitrosylated upon activation of the Fas apoptotic pathway, associated with an increase in intracellular caspase activity. Fas therefore activates caspase-3 not only by inducing the cleavage of the caspase zymogen to its active subunits, but also by stimulating the denitrosylation of its active site thiol. Post-translationally, ubiquitinated by BIRC6; this activity is inhibited by DIABLO/SMAC.

The protein localises to the cytoplasm. It carries out the reaction Strict requirement for an Asp residue at positions P1 and P4. It has a preferred cleavage sequence of Asp-Xaa-Xaa-Asp-|- with a hydrophobic amino-acid residue at P2 and a hydrophilic amino-acid residue at P3, although Val or Ala are also accepted at this position.. With respect to regulation, inhibited by BIRC6; following inhibition of BIRC6-caspase binding by DIABLO/SMAC, BIRC6 is subjected to caspase cleavage, leading to an increase in active caspases. In terms of biological role, involved in the activation cascade of caspases responsible for apoptosis execution. At the onset of apoptosis, it proteolytically cleaves poly(ADP-ribose) polymerase PARP1 at a '216-Asp-|-Gly-217' bond. Cleaves and activates sterol regulatory element binding proteins (SREBPs) between the basic helix-loop-helix leucine zipper domain and the membrane attachment domain. Cleaves and activates caspase-6, -7 and -9 (CASP6, CASP7 and CASP9, respectively). Cleaves and inactivates interleukin-18 (IL18). Triggers cell adhesion in sympathetic neurons through RET cleavage. Cleaves IL-1 beta between an Asp and an Ala, releasing the mature cytokine which is involved in a variety of inflammatory processes. Cleaves and inhibits serine/threonine-protein kinase AKT1 in response to oxidative stress. Acts as an inhibitor of type I interferon production during virus-induced apoptosis by mediating cleavage of antiviral proteins CGAS, IRF3 and MAVS, thereby preventing cytokine overproduction. Also involved in pyroptosis by mediating cleavage and activation of gasdermin-E (GSDME). Cleaves XRCC4 and phospholipid scramblase proteins XKR4, XKR8 and XKR9, leading to promote phosphatidylserine exposure on apoptotic cell surface. Cleaves BIRC6 following inhibition of BIRC6-caspase binding by DIABLO/SMAC. The sequence is that of Caspase-3 (CASP3) from Macaca fascicularis (Crab-eating macaque).